An 80-amino-acid chain; its full sequence is UPF0291 protein EF_1580 (80 aa).

A disordered region spans residues Thr-60–Lys-80. Positions Thr-63–Lys-80 are enriched in basic and acidic residues.

It belongs to the UPF0291 family.

Its subcellular location is the cytoplasm. This chain is UPF0291 protein EF_1580, found in Enterococcus faecalis (strain ATCC 700802 / V583).